The primary structure comprises 133 residues: S-protein homolog 9 (133 aa).

Positions 1–20 are cleaved as a signal peptide; sequence MNRLSCFLLVIGLCIGLSNA.

This sequence belongs to the plant self-incompatibility (S1) protein family.

It localises to the secreted. The sequence is that of S-protein homolog 9 from Arabidopsis thaliana (Mouse-ear cress).